A 306-amino-acid polypeptide reads, in one-letter code: Curved DNA-binding protein (306 aa).

In terms of domain architecture, J spans 5 to 69; sequence DYYAIMGVKP…QRRAEYDQMW (65 aa).

The protein resides in the cytoplasm. Its subcellular location is the nucleoid. Its function is as follows. DNA-binding protein that preferentially recognizes a curved DNA sequence. It is probably a functional analog of DnaJ; displays overlapping activities with DnaJ, but functions under different conditions, probably acting as a molecular chaperone in an adaptive response to environmental stresses other than heat shock. Lacks autonomous chaperone activity; binds native substrates and targets them for recognition by DnaK. Its activity is inhibited by the binding of CbpM. The chain is Curved DNA-binding protein from Shigella sonnei (strain Ss046).